Consider the following 734-residue polypeptide: Alpha-catulin (734 aa).

Phosphoserine occurs at positions 374 and 538.

The protein belongs to the vinculin/alpha-catenin family. As to quaternary structure, interacts with ARHGEF1. Interacts with DTNA. The interaction is required for correct localization of both CTNL1 and DTNA. Widely expressed. Expressed at lower level in neural tissues and at the highest level in the adrenal gland.

The protein localises to the cytoplasm. The protein resides in the cytoskeleton. It is found in the cell membrane. May modulate the Rho pathway signaling by providing a scaffold for the Lbc Rho guanine nucleotide exchange factor (ARHGEF1). In Homo sapiens (Human), this protein is Alpha-catulin (CTNNAL1).